A 431-amino-acid chain; its full sequence is MTNYHFVGIKGTGMSALAQVLHEMNHQVQGSDIDKHIFTEDALRAKGIPFFPFSAENIKEDQVIIQGNAFGDDHPEIARAKELDLTIYHYYDFLGHLADEYRSVAITGSHGKTSTTGLLSHVLSGITPTAFLIGDGTGAGVAEAKAFVFEACEYKRHFLYYKPDYAIMTNIDFDHSDYFTGIDDVVSAFQEMAMQVKQAIVACGDDEHLQNLQANVPILYYGFGENNDFRAENATSTPDGTSFDVYLRDDFYGTFLIPGFGRHHVLNALSVIAICQYEGLNKEEVAARLSTFGGVKRRFSETNFGSQILVDDYAHHPKEISATIESARKKYPDREVVAIFQPHTYTRLKSFMDDFATSLREADATYLCEIFGSAREQEGQVRVEDLQDKVPGSDILTRDNVSILRKHENAVLLFMGAGDIQTYQHQYENAK.

108–114 contributes to the ATP binding site; it reads GSHGKTS.

It belongs to the MurCDEF family.

The protein localises to the cytoplasm. It catalyses the reaction UDP-N-acetyl-alpha-D-muramate + L-alanine + ATP = UDP-N-acetyl-alpha-D-muramoyl-L-alanine + ADP + phosphate + H(+). It functions in the pathway cell wall biogenesis; peptidoglycan biosynthesis. Cell wall formation. This is UDP-N-acetylmuramate--L-alanine ligase from Exiguobacterium sibiricum (strain DSM 17290 / CCUG 55495 / CIP 109462 / JCM 13490 / 255-15).